The following is a 316-amino-acid chain: 4-hydroxy-3-methylbut-2-enyl diphosphate reductase (316 aa).

Cys12 is a binding site for [4Fe-4S] cluster. His41 and His74 together coordinate (2E)-4-hydroxy-3-methylbut-2-enyl diphosphate. The dimethylallyl diphosphate site is built by His41 and His74. His41 and His74 together coordinate isopentenyl diphosphate. Cys96 is a [4Fe-4S] cluster binding site. His124 lines the (2E)-4-hydroxy-3-methylbut-2-enyl diphosphate pocket. His124 contributes to the dimethylallyl diphosphate binding site. His124 is an isopentenyl diphosphate binding site. The active-site Proton donor is Glu126. Residue Thr169 coordinates (2E)-4-hydroxy-3-methylbut-2-enyl diphosphate. Cys199 provides a ligand contact to [4Fe-4S] cluster. (2E)-4-hydroxy-3-methylbut-2-enyl diphosphate is bound by residues Ser227, Ser228, Asn229, and Ser271. Residues Ser227, Ser228, Asn229, and Ser271 each contribute to the dimethylallyl diphosphate site. Residues Ser227, Ser228, Asn229, and Ser271 each contribute to the isopentenyl diphosphate site.

It belongs to the IspH family. [4Fe-4S] cluster serves as cofactor.

The enzyme catalyses isopentenyl diphosphate + 2 oxidized [2Fe-2S]-[ferredoxin] + H2O = (2E)-4-hydroxy-3-methylbut-2-enyl diphosphate + 2 reduced [2Fe-2S]-[ferredoxin] + 2 H(+). It carries out the reaction dimethylallyl diphosphate + 2 oxidized [2Fe-2S]-[ferredoxin] + H2O = (2E)-4-hydroxy-3-methylbut-2-enyl diphosphate + 2 reduced [2Fe-2S]-[ferredoxin] + 2 H(+). Its pathway is isoprenoid biosynthesis; dimethylallyl diphosphate biosynthesis; dimethylallyl diphosphate from (2E)-4-hydroxy-3-methylbutenyl diphosphate: step 1/1. The protein operates within isoprenoid biosynthesis; isopentenyl diphosphate biosynthesis via DXP pathway; isopentenyl diphosphate from 1-deoxy-D-xylulose 5-phosphate: step 6/6. Functionally, catalyzes the conversion of 1-hydroxy-2-methyl-2-(E)-butenyl 4-diphosphate (HMBPP) into a mixture of isopentenyl diphosphate (IPP) and dimethylallyl diphosphate (DMAPP). Acts in the terminal step of the DOXP/MEP pathway for isoprenoid precursor biosynthesis. This Xanthomonas oryzae pv. oryzae (strain MAFF 311018) protein is 4-hydroxy-3-methylbut-2-enyl diphosphate reductase.